We begin with the raw amino-acid sequence, 66 residues long: Phylloseptin-H9 (66 aa).

An N-terminal signal peptide occupies residues M1–C22. A propeptide spanning residues E23–E44 is cleaved from the precursor. The disordered stretch occupies residues E24–E44. Positions E30–K41 are enriched in acidic residues. L65 carries the post-translational modification Leucine amide.

In terms of tissue distribution, expressed by the skin glands.

Its subcellular location is the secreted. Its function is as follows. Has antimicrobial activity. In Pithecopus hypochondrialis (Orange-legged leaf frog), this protein is Phylloseptin-H9.